Here is a 406-residue protein sequence, read N- to C-terminus: Argininosuccinate synthase (406 aa).

ATP contacts are provided by residues 14–22 (AYSGGLDTS) and Ala41. The L-citrulline site is built by Tyr92 and Ser97. Residue Gly122 participates in ATP binding. 3 residues coordinate L-aspartate: Thr124, Asn128, and Asp129. Asn128 contacts L-citrulline. Arg132, Ser181, Ser190, Glu266, and Tyr278 together coordinate L-citrulline.

This sequence belongs to the argininosuccinate synthase family. Type 1 subfamily. Homotetramer.

Its subcellular location is the cytoplasm. It catalyses the reaction L-citrulline + L-aspartate + ATP = 2-(N(omega)-L-arginino)succinate + AMP + diphosphate + H(+). The protein operates within amino-acid biosynthesis; L-arginine biosynthesis; L-arginine from L-ornithine and carbamoyl phosphate: step 2/3. This chain is Argininosuccinate synthase, found in Geobacter metallireducens (strain ATCC 53774 / DSM 7210 / GS-15).